The sequence spans 301 residues: Putative carboxypeptidase slr1534 (301 aa).

Residue Ser116 is the Nucleophile of the active site. Residues Glu206 and His276 each act as charge relay system in the active site.

The protein belongs to the peptidase S66 family.

The polypeptide is Putative carboxypeptidase slr1534 (Synechocystis sp. (strain ATCC 27184 / PCC 6803 / Kazusa)).